The chain runs to 337 residues: Ribosomal RNA small subunit methyltransferase H (337 aa).

S-adenosyl-L-methionine contacts are provided by residues Gly45–His47, Asp64, Phe91, Asp120, and Gln127.

The protein belongs to the methyltransferase superfamily. RsmH family.

Its subcellular location is the cytoplasm. The catalysed reaction is cytidine(1402) in 16S rRNA + S-adenosyl-L-methionine = N(4)-methylcytidine(1402) in 16S rRNA + S-adenosyl-L-homocysteine + H(+). Specifically methylates the N4 position of cytidine in position 1402 (C1402) of 16S rRNA. The protein is Ribosomal RNA small subunit methyltransferase H of Corynebacterium glutamicum (strain ATCC 13032 / DSM 20300 / JCM 1318 / BCRC 11384 / CCUG 27702 / LMG 3730 / NBRC 12168 / NCIMB 10025 / NRRL B-2784 / 534).